Consider the following 656-residue polypeptide: Vacuolar amino acid transporter 3 (656 aa).

The tract at residues 1-109 (MSNSQSIKIK…VPSTSEDPDV (109 aa)) is disordered. Positions 15 to 28 (NENFASGSYSSRRS) are enriched in polar residues. A phosphoserine mark is found at serine 37 and serine 53. Residues 50–71 (ISPSESNLPNNVAENTTDTPVN) are compositionally biased toward polar residues. Residues 75 to 97 (IRDENHNSRKGKDVTLNSDEAHS) are compositionally biased toward basic and acidic residues. Position 172 is a phosphoserine (serine 172). Helical transmembrane passes span 280-300 (AVLL…PKAF), 307-327 (FSSA…LLLI), 351-371 (FAIL…YISF), 389-409 (EYHL…LSLV), 419-439 (ALIA…WDVI), 457-477 (FSLF…ILPI), 494-514 (VMAA…AAFG), 537-557 (LYAI…IAII), 578-598 (YLRV…SSRL), 601-621 (FVSM…PPML), and 636-656 (DIFM…MTFF).

It belongs to the amino acid/polyamine transporter 2 family.

It is found in the endoplasmic reticulum membrane. It localises to the vacuole membrane. In terms of biological role, involved in amino acid efflux from the vacuole to the cytoplasm. Capable of transporting large neutral amino acids including tyrosine, glutamine, asparagine, isoleucine and leucine. Required for spore formation. This is Vacuolar amino acid transporter 3 (avt3) from Schizosaccharomyces pombe (strain 972 / ATCC 24843) (Fission yeast).